A 137-amino-acid chain; its full sequence is Large-conductance mechanosensitive channel (137 aa).

Helical transmembrane passes span 10 to 30 (FAMR…AAFG) and 76 to 96 (GVFI…FMAI).

The protein belongs to the MscL family. As to quaternary structure, homopentamer.

It is found in the cell inner membrane. Functionally, channel that opens in response to stretch forces in the membrane lipid bilayer. May participate in the regulation of osmotic pressure changes within the cell. This chain is Large-conductance mechanosensitive channel, found in Enterobacter sp. (strain 638).